The primary structure comprises 268 residues: Probable intron-encoded DNA endonuclease 1 (268 aa).

This sequence belongs to the LAGLIDADG endonuclease family.

It localises to the mitochondrion. Functionally, mitochondrial DNA endonuclease involved in intron homing. The sequence is that of Probable intron-encoded DNA endonuclease 1 (hegI1) from Mycosarcoma maydis (Corn smut fungus).